A 357-amino-acid chain; its full sequence is uncharacterized protein (357 aa).

Transmembrane regions (helical) follow at residues 13–33 (PVTGIYNILLFNLFPLATYLV), 44–64 (IACTLLCSITVILAYRMCAVY), 72–92 (VSTFGLAYGFLIMMSLRTCFL), 148–168 (VLTYKSLGIRTAVYVGAFCFV), 181–201 (LPISANPWYIQVAFCVTSGFF), 203–223 (YLFINALYYLFAIIFVPLGIW), 266–286 (IALTGSKFLASCSCFFLSALF), 293–313 (SISGRCSPAFFFQLLIQPFLI), and 327–347 (YWVLIIEMLINGTYGMGVVLL).

The protein localises to the mitochondrion membrane. This is an uncharacterized protein from Schizosaccharomyces pombe (strain 972 / ATCC 24843) (Fission yeast).